Here is a 955-residue protein sequence, read N- to C-terminus: 2-oxoglutarate dehydrogenase E1 component (955 aa).

The protein belongs to the alpha-ketoglutarate dehydrogenase family. As to quaternary structure, homodimer. Part of the 2-oxoglutarate dehydrogenase (OGDH) complex composed of E1 (2-oxoglutarate dehydrogenase), E2 (dihydrolipoamide succinyltransferase) and E3 (dihydrolipoamide dehydrogenase); the complex contains multiple copies of the three enzymatic components (E1, E2 and E3). It depends on thiamine diphosphate as a cofactor.

The catalysed reaction is N(6)-[(R)-lipoyl]-L-lysyl-[protein] + 2-oxoglutarate + H(+) = N(6)-[(R)-S(8)-succinyldihydrolipoyl]-L-lysyl-[protein] + CO2. E1 component of the 2-oxoglutarate dehydrogenase (OGDH) complex which catalyzes the decarboxylation of 2-oxoglutarate, the first step in the conversion of 2-oxoglutarate to succinyl-CoA and CO(2). This chain is 2-oxoglutarate dehydrogenase E1 component, found in Bacillus anthracis (strain A0248).